Reading from the N-terminus, the 235-residue chain is Small ribosomal subunit protein uS3 (235 aa).

The KH type-2 domain maps to 39–107 (VRKFLNKELA…PAQINIAEVK (69 aa)). Residues 215–235 (AQPEQQPADKPKKAPRGKGRK) form a disordered region.

It belongs to the universal ribosomal protein uS3 family. As to quaternary structure, part of the 30S ribosomal subunit. Forms a tight complex with proteins S10 and S14.

Binds the lower part of the 30S subunit head. Binds mRNA in the 70S ribosome, positioning it for translation. The chain is Small ribosomal subunit protein uS3 from Pasteurella multocida (strain Pm70).